We begin with the raw amino-acid sequence, 877 residues long: AP-5 complex subunit beta-1 (877 aa).

Probably part of the adaptor protein complex 5 (AP-5), a tetramer composed of AP5B1, AP5M1, AP5S1 and AP5Z1. Interacts with ZFYVE26 and SPG11.

Its function is as follows. As part of AP-5, a probable fifth adaptor protein complex, it may be involved in endosomal transport. This chain is AP-5 complex subunit beta-1 (AP5B1), found in Bos taurus (Bovine).